The chain runs to 291 residues: Homoserine kinase (291 aa).

ATP is bound at residue 80–90; it reads RPASGLGSSAA.

It belongs to the GHMP kinase family. Homoserine kinase subfamily.

It localises to the cytoplasm. The enzyme catalyses L-homoserine + ATP = O-phospho-L-homoserine + ADP + H(+). It participates in amino-acid biosynthesis; L-threonine biosynthesis; L-threonine from L-aspartate: step 4/5. Its function is as follows. Catalyzes the ATP-dependent phosphorylation of L-homoserine to L-homoserine phosphate. This is Homoserine kinase from Haloarcula marismortui (strain ATCC 43049 / DSM 3752 / JCM 8966 / VKM B-1809) (Halobacterium marismortui).